The sequence spans 538 residues: Putative cysteine ligase BshC (538 aa).

Positions 460–484 (KINEQIELLERMLKRNVEKKHEVEL) form a coiled coil.

This sequence belongs to the BshC family.

In terms of biological role, involved in bacillithiol (BSH) biosynthesis. May catalyze the last step of the pathway, the addition of cysteine to glucosamine malate (GlcN-Mal) to generate BSH. The polypeptide is Putative cysteine ligase BshC (Bacillus thuringiensis (strain Al Hakam)).